A 76-amino-acid polypeptide reads, in one-letter code: Gas vesicle protein A1 (76 aa).

Binds to GvpF1 stretches follow at residues 1–22 (MAQP…KGVV) and 2–43 (AQPD…EARV). Residues 9-19 (LAEVLDRVLDK) form an alpha helix 1 region. The interval 23–31 (VDVWARVSL) is beta-strand 1. Positions 32–34 (VGI) are beta turn. A beta-strand 2 region spans residues 35-43 (EILTVEARV). The interval 48–67 (VDTFLHYAEEIAKIEQAELT) is alpha helix 2.

It belongs to the gas vesicle GvpA family. In terms of assembly, major component of the gas vesicle shell which is 2 nm thick and consists of a single layer of the protein. It forms 4.6 nm-wide ribs nearly perpendicular to the long axis of the vesicle. Modeled as antiparallel homodimers. The ribs form a low-pitch helix rather than a stack of hoops. Interacts with GvpF1 via its N-terminus (residues 1-43) in early growth stages, none of the other GvpG1 to GvpM1 proteins were seen to directly bind GvpA1 in H.volcanii experiments. Might interact with GvpJ1. Might interact with GvpG1, GvpH1, GvpJ1, GvpM1, GvpN1 and GvpO1.

It is found in the gas vesicle shell. Its function is as follows. Gas vesicles are hollow, gas filled proteinaceous nanostructures found in several microbial planktonic microorganisms. They allow positioning of halobacteria at the optimal depth for growth in the poorly aerated shallow brine pools of their habitat. GvpA forms the protein shell. The critical collapse pressure (CCP) of p-vac gas vesicles is 0.66 MPa; mutating residues in p-gvpA to those found in c-gvpA increases the CCP. These residues partially and independently control the width and strength of gas vesicles. In stationary phase gas vesicles, about 30 times more GvpA1 is found than GvpA2. Functionally, expression of a 9.5 kb p-vac DNA fragment containing 2 divergently transcribed regions (gvpD-gvpE-gvpF-gvpG-gvpH-gvpI-gvpJ-gvpK-gvpL-gvpM and gvpA-gvpC-gvpN-gvpO) allows H.volcanii to produce gas vesicles. All site-directed mutagenesis is tested in H.volcanii. A minimal gas vesicle can be made in H.volcanii by gvpA1-gvpO1 plus gvpF1-gvpG1-gvpJ1-gvpK1-gvpL1-gvpM1; lack of enough GvpJ1 prevents their formation. A similar region restores gas vesicle production in H.halobium without the p-vac locus, but it still has the c-vac locus. In Halobacterium salinarum (strain ATCC 700922 / JCM 11081 / NRC-1) (Halobacterium halobium), this protein is Gas vesicle protein A1.